The following is a 94-amino-acid chain: Integration host factor subunit beta (94 aa).

The protein belongs to the bacterial histone-like protein family. Heterodimer of an alpha and a beta chain.

Functionally, this protein is one of the two subunits of integration host factor, a specific DNA-binding protein that functions in genetic recombination as well as in transcriptional and translational control. This is Integration host factor subunit beta from Edwardsiella ictaluri (strain 93-146).